The chain runs to 433 residues: Protein arginine N-methyltransferase 2 (433 aa).

The segment at 1 to 20 (MATSGDCPRSESQGEEPAEC) is disordered. Interaction with ESR1 stretches follow at residues 1 to 277 (MATS…SALK) and 133 to 275 (KESL…NLSA). An SH3 domain is found at 30-89 (VQPEEFVAIADYAATDETQLSFLRGEKILILRQTTADWWWGERAGCCGYIPANHVGKHVD). Asymmetric dimethylarginine is present on residues arginine 61 and arginine 72. Residues 83 to 207 (HVGKHVDEYD…DVVLPEKVDV (125 aa)) are interaction with RB1. The SAM-dependent MTase PRMT-type domain occupies 99–432 (DEEYFGSYGT…KVGEKVFPIW (334 aa)). Residues histidine 112, arginine 121, glycine 145, glutamate 168, and glutamate 197 each coordinate S-adenosyl-L-methionine. Active-site residues include glutamate 211 and glutamate 220.

It belongs to the class I-like SAM-binding methyltransferase superfamily. Protein arginine N-methyltransferase family. In terms of assembly, self-associates. Interacts with RB1 and E2F1. Interacts with NCOA6 coactivator. Interacts (via SH3 domain) with PRMT8. Interacts with AR. Interacts with NFKBIA. Interacts with ESR1, ESR2, PGR, PPARG, RARA, RXRA and THRB. Interacts with HNRNPUL1. As to expression, widely expressed. Highly expressed in androgen target organs such as heart, prostate, skeletal muscle, ovary and spinal cord.

It localises to the cytoplasm. Its subcellular location is the nucleus. The protein localises to the nucleolus. The enzyme catalyses L-arginyl-[protein] + 2 S-adenosyl-L-methionine = N(omega),N(omega)-dimethyl-L-arginyl-[protein] + 2 S-adenosyl-L-homocysteine + 2 H(+). Arginine methyltransferase that methylates the guanidino nitrogens of arginyl residues in proteins such as STAT3, FBL, histone H4. Acts as a coactivator (with NCOA2) of the androgen receptor (AR)-mediated transactivation. Acts as a coactivator (with estrogen) of estrogen receptor (ER)-mediated transactivation. Enhances PGR, PPARG, RARA-mediated transactivation. May inhibit NF-kappa-B transcription and promote apoptosis. Represses E2F1 transcriptional activity (in a RB1-dependent manner). May be involved in growth regulation. In Homo sapiens (Human), this protein is Protein arginine N-methyltransferase 2 (PRMT2).